The following is a 130-amino-acid chain: Small ribosomal subunit protein uS17m (130 aa).

It belongs to the universal ribosomal protein uS17 family. In terms of assembly, component of the mitochondrial ribosome small subunit (28S) which comprises a 12S rRNA and about 30 distinct proteins.

Its subcellular location is the mitochondrion. The chain is Small ribosomal subunit protein uS17m (MRPS17) from Bos taurus (Bovine).